Consider the following 402-residue polypeptide: E3 ubiquitin-protein ligase MARCHF11 (402 aa).

Residues Met1–Arg11 are compositionally biased toward gly residues. The tract at residues Met1 to His161 is disordered. Over residues Glu21–Pro56 the composition is skewed to pro residues. A compositionally biased stretch (low complexity) spans Glu111 to Ala124. An RING-CH-type zinc finger spans residues Gln162–Ile222. Zn(2+) is bound by residues Cys170, Cys173, Cys186, Cys188, His196, Cys199, Cys212, and Cys215. The next 2 membrane-spanning stretches (helical) occupy residues Met245–Ser265 and Ile278–Ile298. The YXXL motif signature appears at Tyr371–Leu374. The PDZ-binding motif lies at Val399–Val402.

In terms of assembly, interacts (YXXL motif) with AP1M1. Interacts (via PDZ-binding motif) with LIN7A. Interacts with unidentified fucose glycoproteins.

The protein localises to the cytoplasmic vesicle membrane. It catalyses the reaction S-ubiquitinyl-[E2 ubiquitin-conjugating enzyme]-L-cysteine + [acceptor protein]-L-lysine = [E2 ubiquitin-conjugating enzyme]-L-cysteine + N(6)-ubiquitinyl-[acceptor protein]-L-lysine.. The protein operates within protein modification; protein ubiquitination. E3 ubiquitin-protein ligase that mediates polyubiquitination of CD4. E3 ubiquitin ligases accept ubiquitin from an E2 ubiquitin-conjugating enzyme in the form of a thioester and then directly transfer the ubiquitin to targeted substrates. May play a role in ubuquitin-dependent protein sorting in developmenting spermatids. The protein is E3 ubiquitin-protein ligase MARCHF11 of Homo sapiens (Human).